We begin with the raw amino-acid sequence, 229 residues long: Heptaprenylglyceryl phosphate synthase (229 aa).

Lys12 serves as a coordination point for sn-glycerol 1-phosphate. The Mg(2+) site is built by Asp14 and Ser40. Sn-glycerol 1-phosphate is bound by residues 159-164 (YLEYSG), Gly189, and 209-210 (GN).

The protein belongs to the GGGP/HepGP synthase family. Group I subfamily. As to quaternary structure, homodimer. Requires Mg(2+) as cofactor.

It carries out the reaction sn-glycerol 1-phosphate + all-trans-heptaprenyl diphosphate = 3-heptaprenyl-sn-glycero-1-phosphate + diphosphate. Its pathway is membrane lipid metabolism; glycerophospholipid metabolism. Its function is as follows. Prenyltransferase that catalyzes in vivo the transfer of the heptaprenyl moiety of heptaprenyl pyrophosphate (HepPP; 35 carbon atoms) to the C3 hydroxyl of sn-glycerol-1-phosphate (G1P), producing heptaprenylglyceryl phosphate (HepGP). This reaction is an ether-bond-formation step in the biosynthesis of archaea-type G1P-based membrane lipids found in Bacillales. The polypeptide is Heptaprenylglyceryl phosphate synthase (Bacillus cereus (strain AH187)).